A 368-amino-acid chain; its full sequence is Glycolate oxidase 2 (368 aa).

An FMN hydroxy acid dehydrogenase domain is found at 1–360 (MALVTNVCEY…TRGHVVTESD (360 aa)). Residues 78–80 (PTA), Ser-107, 128–130 (QLS), and Thr-156 contribute to the FMN site. A glyoxylate-binding site is contributed by Arg-165. The FMN site is built by Lys-231 and Ser-253. Glyoxylate-binding residues include His-255 and Arg-258. His-255 serves as the catalytic Proton acceptor. FMN-binding positions include 286–290 (DSGFR) and 309–310 (GR). The short motif at 366 to 368 (SRL) is the Microbody targeting signal element.

This sequence belongs to the FMN-dependent alpha-hydroxy acid dehydrogenase family. In terms of assembly, homotetramer. Requires FMN as cofactor.

The protein localises to the peroxisome. The catalysed reaction is glycolate + O2 = glyoxylate + H2O2. Its pathway is photosynthesis; photorespiration; glycine from 2-phosphoglycolate: step 2/3. Functionally, catalyzes the oxidation of glycolate to glyoxylate, with a reduction of O2 to H2O2. Is a key enzyme in photorespiration in green plants. This Oryza sativa subsp. indica (Rice) protein is Glycolate oxidase 2 (GLO2).